The sequence spans 261 residues: tRNA pseudouridine synthase A (261 aa).

The active-site Nucleophile is aspartate 51. Tyrosine 109 serves as a coordination point for substrate.

This sequence belongs to the tRNA pseudouridine synthase TruA family. Homodimer.

The enzyme catalyses uridine(38/39/40) in tRNA = pseudouridine(38/39/40) in tRNA. Functionally, formation of pseudouridine at positions 38, 39 and 40 in the anticodon stem and loop of transfer RNAs. This Shewanella piezotolerans (strain WP3 / JCM 13877) protein is tRNA pseudouridine synthase A.